Reading from the N-terminus, the 883-residue chain is Probable pre-mRNA-splicing factor ATP-dependent RNA helicase DEAH8 (883 aa).

The Helicase ATP-binding domain occupies 232–395; the sequence is LKLIEENQVL…FDSARIYLIP (164 aa). An ATP-binding site is contributed by 245-252; the sequence is GETGSGKT. The DEAH box signature appears at 342–345; it reads DEAH. The Helicase C-terminal domain maps to 416–589; it reads TVIRTVVQIH…SVVLTLKSLG (174 aa). The interval 845–883 is disordered; it reads EDTRPKKTQRRIEEASTSKVDTNKKTRTSKVDTNKKSKR.

This sequence belongs to the DEAD box helicase family. DEAH subfamily. PRP2 sub-subfamily. In terms of tissue distribution, predominantly expressed in flowers.

It carries out the reaction ATP + H2O = ADP + phosphate + H(+). May be involved in pre-mRNA splicing. The sequence is that of Probable pre-mRNA-splicing factor ATP-dependent RNA helicase DEAH8 from Arabidopsis thaliana (Mouse-ear cress).